The following is a 180-amino-acid chain: Adenine phosphoribosyltransferase (180 aa).

It belongs to the purine/pyrimidine phosphoribosyltransferase family. Homodimer.

The protein resides in the cytoplasm. The enzyme catalyses AMP + diphosphate = 5-phospho-alpha-D-ribose 1-diphosphate + adenine. It functions in the pathway purine metabolism; AMP biosynthesis via salvage pathway; AMP from adenine: step 1/1. In terms of biological role, catalyzes a salvage reaction resulting in the formation of AMP, that is energically less costly than de novo synthesis. The polypeptide is Adenine phosphoribosyltransferase (Agrobacterium fabrum (strain C58 / ATCC 33970) (Agrobacterium tumefaciens (strain C58))).